Here is a 407-residue protein sequence, read N- to C-terminus: E3 ubiquitin-protein ligase TRIM13 (407 aa).

The RING-type zinc finger occupies 10–58 (CPICCSLFDDPRVLPCSHNFCKKCLEGILEGSVRNSLWRPAPFKCPTCR). The B box-type zinc finger occupies 89–131 (PKMPVCKGHLGQPLNIFCLTDMQLICGICATRGEHTKHVFCSI). Positions 94, 97, 117, and 123 each coordinate Zn(2+). Residues 172-200 (LQLLTKDSDKVKEFFEKLQHTLDQKKNEI) are a coiled coil. A helical membrane pass occupies residues 317–337 (LFLLILLLGLVIVFGPTMFLE).

This sequence belongs to the TRIM/RBCC family. Interacts (via C-terminal domain) with VCP. Interacts with AKT1; the interaction ubiquitinates AKT1 and leads to its proteasomal degradation. Interacts with MDM2; the interaction ubiquitinates AKT1 and leads to its proteasomal degradation. Interacts with p62/SQSTM1. Interacts with TRAF6. Interacts with IKBKG/NEMO. Auto-ubiquitinated; requires the RING-type zinc finger. Auto-polyubiquitination leads to proteasomal degradation.

It localises to the endoplasmic reticulum membrane. It catalyses the reaction S-ubiquitinyl-[E2 ubiquitin-conjugating enzyme]-L-cysteine + [acceptor protein]-L-lysine = [E2 ubiquitin-conjugating enzyme]-L-cysteine + N(6)-ubiquitinyl-[acceptor protein]-L-lysine.. It functions in the pathway protein modification; protein ubiquitination. Functionally, endoplasmic reticulum (ER) membrane anchored E3 ligase involved in the retrotranslocation and turnover of membrane and secretory proteins from the ER through a set of processes named ER-associated degradation (ERAD). This process acts on misfolded proteins as well as in the regulated degradation of correctly folded proteins. Enhances ionizing radiation-induced p53/TP53 stability and apoptosis via ubiquitinating MDM2 and AKT1 and decreasing AKT1 kinase activity through MDM2 and AKT1 proteasomal degradation. Regulates ER stress-induced autophagy, and may act as a tumor suppressor. Also plays a role in innate immune response by stimulating NF-kappa-B activity in the TLR2 signaling pathway. Ubiquitinates TRAF6 via the 'Lys-29'-linked polyubiquitination chain resulting in NF-kappa-B activation. Participates as well in T-cell receptor-mediated NF-kappa-B activation. In the presence of TNF, modulates the IKK complex by regulating IKBKG/NEMO ubiquitination leading to the repression of NF-kappa-B. The chain is E3 ubiquitin-protein ligase TRIM13 (TRIM13) from Homo sapiens (Human).